We begin with the raw amino-acid sequence, 105 residues long: Large ribosomal subunit protein bL21 (105 aa).

It belongs to the bacterial ribosomal protein bL21 family. As to quaternary structure, part of the 50S ribosomal subunit. Contacts protein L20.

This protein binds to 23S rRNA in the presence of protein L20. This Phocaeicola vulgatus (strain ATCC 8482 / DSM 1447 / JCM 5826 / CCUG 4940 / NBRC 14291 / NCTC 11154) (Bacteroides vulgatus) protein is Large ribosomal subunit protein bL21.